The chain runs to 273 residues: 4-hydroxy-tetrahydrodipicolinate reductase (273 aa).

NAD(+)-binding positions include 12 to 17 (GAGGRM) and Glu38. NADP(+) is bound at residue Arg39. Residues 102–104 (GTT) and 126–129 (AANF) each bind NAD(+). Residue His159 is the Proton donor/acceptor of the active site. (S)-2,3,4,5-tetrahydrodipicolinate is bound at residue His160. Lys163 serves as the catalytic Proton donor. (S)-2,3,4,5-tetrahydrodipicolinate is bound at residue 169-170 (GT).

Belongs to the DapB family. As to quaternary structure, homotetramer.

The protein localises to the cytoplasm. It catalyses the reaction (S)-2,3,4,5-tetrahydrodipicolinate + NAD(+) + H2O = (2S,4S)-4-hydroxy-2,3,4,5-tetrahydrodipicolinate + NADH + H(+). The enzyme catalyses (S)-2,3,4,5-tetrahydrodipicolinate + NADP(+) + H2O = (2S,4S)-4-hydroxy-2,3,4,5-tetrahydrodipicolinate + NADPH + H(+). The protein operates within amino-acid biosynthesis; L-lysine biosynthesis via DAP pathway; (S)-tetrahydrodipicolinate from L-aspartate: step 4/4. In terms of biological role, catalyzes the conversion of 4-hydroxy-tetrahydrodipicolinate (HTPA) to tetrahydrodipicolinate. This Proteus mirabilis (strain HI4320) protein is 4-hydroxy-tetrahydrodipicolinate reductase.